The sequence spans 138 residues: Probable scaffold protein gp13 (138 aa).

Functionally, may act as an organizer for the correct association of several proteins in the surrounding of the head-tail connector protein gp8. The sequence is that of Probable scaffold protein gp13 from Escherichia coli (Bacteriophage T7).